The sequence spans 201 residues: MARYIGPKTKIARKFGEPIFGPDKSLIKSERAAGNNKHAPRKKKMSVFGTQLAEKQKAKYTYGLLEKQFSNLFTKAHSLPGVTGEVLMQLLECRLDNIVYRMGLARTRAAARQLVTHRHITVDGEIVKTPSYSVKPGQVISVTEGSKSLSMFEVNLKGYDHAKYSWIEWKEPVSAKYVRIPERAEIPENINEQLIVEHYSK.

The S4 RNA-binding domain maps to 93–155 (CRLDNIVYRM…SKSLSMFEVN (63 aa)).

Belongs to the universal ribosomal protein uS4 family. As to quaternary structure, part of the 30S ribosomal subunit. Contacts protein S5. The interaction surface between S4 and S5 is involved in control of translational fidelity.

In terms of biological role, one of the primary rRNA binding proteins, it binds directly to 16S rRNA where it nucleates assembly of the body of the 30S subunit. With S5 and S12 plays an important role in translational accuracy. This is Small ribosomal subunit protein uS4 from Elusimicrobium minutum (strain Pei191).